We begin with the raw amino-acid sequence, 289 residues long: Ribosomal protein L11 methyltransferase (289 aa).

S-adenosyl-L-methionine is bound by residues Thr-142, Gly-163, Asp-185, and Asn-226.

The protein belongs to the methyltransferase superfamily. PrmA family.

Its subcellular location is the cytoplasm. The enzyme catalyses L-lysyl-[protein] + 3 S-adenosyl-L-methionine = N(6),N(6),N(6)-trimethyl-L-lysyl-[protein] + 3 S-adenosyl-L-homocysteine + 3 H(+). Its function is as follows. Methylates ribosomal protein L11. This Legionella pneumophila subsp. pneumophila (strain Philadelphia 1 / ATCC 33152 / DSM 7513) protein is Ribosomal protein L11 methyltransferase.